Consider the following 187-residue polypeptide: Elongation factor P (187 aa).

Belongs to the elongation factor P family.

The protein resides in the cytoplasm. It participates in protein biosynthesis; polypeptide chain elongation. Functionally, involved in peptide bond synthesis. Stimulates efficient translation and peptide-bond synthesis on native or reconstituted 70S ribosomes in vitro. Probably functions indirectly by altering the affinity of the ribosome for aminoacyl-tRNA, thus increasing their reactivity as acceptors for peptidyl transferase. In Fusobacterium nucleatum subsp. nucleatum (strain ATCC 25586 / DSM 15643 / BCRC 10681 / CIP 101130 / JCM 8532 / KCTC 2640 / LMG 13131 / VPI 4355), this protein is Elongation factor P.